Reading from the N-terminus, the 360-residue chain is Chorismate synthase (360 aa).

Positions 48 and 54 each coordinate NADP(+). FMN-binding positions include 125–127 (RSS), 246–247 (NA), Gly286, 301–305 (KPTSS), and Arg327.

This sequence belongs to the chorismate synthase family. Homotetramer. FMNH2 serves as cofactor.

The enzyme catalyses 5-O-(1-carboxyvinyl)-3-phosphoshikimate = chorismate + phosphate. It participates in metabolic intermediate biosynthesis; chorismate biosynthesis; chorismate from D-erythrose 4-phosphate and phosphoenolpyruvate: step 7/7. Catalyzes the anti-1,4-elimination of the C-3 phosphate and the C-6 proR hydrogen from 5-enolpyruvylshikimate-3-phosphate (EPSP) to yield chorismate, which is the branch point compound that serves as the starting substrate for the three terminal pathways of aromatic amino acid biosynthesis. This reaction introduces a second double bond into the aromatic ring system. This chain is Chorismate synthase, found in Actinobacillus succinogenes (strain ATCC 55618 / DSM 22257 / CCUG 43843 / 130Z).